Reading from the N-terminus, the 405-residue chain is L-carnitine CoA-transferase (405 aa).

The CoA site is built by lysine 97 and arginine 104. Catalysis depends on aspartate 169, which acts as the Nucleophile.

Belongs to the CoA-transferase III family. CaiB subfamily. In terms of assembly, homodimer.

Its subcellular location is the cytoplasm. It catalyses the reaction crotonobetainyl-CoA + (R)-carnitine = crotonobetaine + (R)-carnitinyl-CoA. It carries out the reaction 4-(trimethylamino)butanoyl-CoA + (R)-carnitine = (R)-carnitinyl-CoA + 4-(trimethylamino)butanoate. It functions in the pathway amine and polyamine metabolism; carnitine metabolism. In terms of biological role, catalyzes the reversible transfer of the CoA moiety from gamma-butyrobetainyl-CoA to L-carnitine to generate L-carnitinyl-CoA and gamma-butyrobetaine. Is also able to catalyze the reversible transfer of the CoA moiety from gamma-butyrobetainyl-CoA or L-carnitinyl-CoA to crotonobetaine to generate crotonobetainyl-CoA. This chain is L-carnitine CoA-transferase, found in Salmonella gallinarum (strain 287/91 / NCTC 13346).